We begin with the raw amino-acid sequence, 184 residues long: Vacuolar protein sorting-associated protein 68 (184 aa).

At M1 the chain carries N-acetylmethionine. S8 bears the Phosphoserine mark. A helical membrane pass occupies residues 26-46 (GVYLSGALYALGFWIFLDAVL). Residue N52 is glycosylated (N-linked (GlcNAc...) asparagine). 3 helical membrane-spanning segments follow: residues 56-76 (VHVT…TLIV), 115-135 (LFFG…VLII), and 150-170 (MGVN…VLWI).

It belongs to the UPF0220 family.

It localises to the vacuole membrane. The protein resides in the mitochondrion. In terms of biological role, involved in vacuolar protein sorting. The sequence is that of Vacuolar protein sorting-associated protein 68 (VPS68) from Saccharomyces cerevisiae (strain ATCC 204508 / S288c) (Baker's yeast).